The sequence spans 106 residues: Toxin-like structure LSTX-D7 (106 aa).

An N-terminal signal peptide occupies residues 1 to 20 (MMKVLVVFALLVTLISYSSS). The propeptide occupies 21-41 (EGIDDLEADELLSLMANEQTR). Cystine bridges form between Cys45–Cys60, Cys52–Cys69, Cys59–Cys85, and Cys71–Cys83.

Belongs to the neurotoxin 19 (CSTX) family. 02 (D7) subfamily. Expressed by the venom gland.

It localises to the secreted. This is Toxin-like structure LSTX-D7 from Lycosa singoriensis (Wolf spider).